A 138-amino-acid chain; its full sequence is MLQPKRRKYRKEQKGRNTGVATRGNAVSFGEYGLKAIGRGRLTARQIEAARRAMTRHIKRGGRIWIRIFPDKPISQKPAEVRMGNGKGNPEYYVAEIQPGKMLYEMDGVSEELAREAFRLAAAKLPLKTTFMVRQLGA.

Residues 1 to 13 (MLQPKRRKYRKEQ) are compositionally biased toward basic residues. The interval 1–22 (MLQPKRRKYRKEQKGRNTGVAT) is disordered.

The protein belongs to the universal ribosomal protein uL16 family. As to quaternary structure, part of the 50S ribosomal subunit.

Its function is as follows. Binds 23S rRNA and is also seen to make contacts with the A and possibly P site tRNAs. This Paraburkholderia phymatum (strain DSM 17167 / CIP 108236 / LMG 21445 / STM815) (Burkholderia phymatum) protein is Large ribosomal subunit protein uL16.